A 91-amino-acid chain; its full sequence is uncharacterized protein (91 aa).

Its subcellular location is the plastid. The protein resides in the cyanelle. This is an uncharacterized protein from Cyanophora paradoxa.